Consider the following 1133-residue polypeptide: ATP-dependent DNA helicase homolog MER3 (1133 aa).

The Helicase ATP-binding domain occupies 34–229; sequence PLCFHSDINM…WLKVPTAGIK (196 aa). ATP is bound at residue 47–54; it reads APTGSGKT. The DEVH box signature appears at 165 to 168; the sequence is DEVH. The region spanning 263 to 460 is the Helicase C-terminal domain; sequence YIYDILMQYS…CLIEHLTAEI (198 aa). The region spanning 536–847 is the SEC63 domain; sequence EPGRLMTKYY…FEEYIGIDLH (312 aa). The segment at 878 to 919 is disordered; it reads ACIADDDNPVTSGPSNRKDKKDDMPSFKLIDDDSEEEKEPYV. Positions 893-908 are enriched in basic and acidic residues; it reads NRKDKKDDMPSFKLID. The span at 909-919 shows a compositional bias: acidic residues; it reads DDSEEEKEPYV.

This sequence belongs to the helicase family. SKI2 subfamily. Expressed in meiocytes during meiosis.

Its subcellular location is the nucleus. It carries out the reaction Couples ATP hydrolysis with the unwinding of duplex DNA by translocating in the 3'-5' direction.. The catalysed reaction is ATP + H2O = ADP + phosphate + H(+). In terms of biological role, DNA helicase required for crossover formation, complete synapsis of homologous chromosomes and bivalent formation during meiosis. Is specific to recombination events resulting in interference-sensitive crossovers (class I meiotic crossover). This chain is ATP-dependent DNA helicase homolog MER3, found in Arabidopsis thaliana (Mouse-ear cress).